A 104-amino-acid chain; its full sequence is Ycf49-like protein (104 aa).

3 helical membrane-spanning segments follow: residues Ile-6–Val-26, Leu-41–Phe-61, and Leu-73–Tyr-93.

This sequence belongs to the ycf49 family.

The protein localises to the cell membrane. This is Ycf49-like protein from Synechocystis sp. (strain ATCC 27184 / PCC 6803 / Kazusa).